The following is a 507-amino-acid chain: Proton-coupled zinc antiporter SLC30A1 (507 aa).

The Cytoplasmic portion of the chain corresponds to 1–10 (MGCWGRNRGR). A helical transmembrane segment spans residues 11-31 (LLCMLLLTFMFMVLEVVVSRV). The Extracellular portion of the chain corresponds to 32–35 (TASL). Residues 36 to 56 (AMLSDSFHMLSDVLALVVALV) traverse the membrane as a helical segment. Zn(2+) is bound by residues His-43 and Asp-47. Topologically, residues 57–78 (AERFARRTHATQKNTFGWIRAE) are cytoplasmic. The chain crosses the membrane as a helical span at residues 79-99 (VMGALVNAIFLTGLCFAILLE). Residues 100–113 (AVERFIEPHEMQQP) lie on the Extracellular side of the membrane. Residues 114 to 134 (LVVLSVGVAGLLVNVLGLCLF) traverse the membrane as a helical segment. Residues 135-247 (HHHSGEGQGA…RAGQLNMRGV (113 aa)) are Cytoplasmic-facing. Residues 140 to 218 (EGQGAGHGHS…EKLRSDDPVD (79 aa)) form a disordered region. The segment at 145 to 156 (GHGHSHGHGHGH) is 6 X 2 AA approximate repeats of H-G. Positions 147–165 (GHSHGHGHGHLAKGARKAG) are enriched in basic residues. Positions 188–200 (TNTLVANTSNSNG) are enriched in polar residues. Residues 204 to 215 (DQAEPEKLRSDD) show a composition bias toward basic and acidic residues. The helical transmembrane segment at 248-268 (FLHVLGDALGSVIVVVNALVF) threads the bilayer. Residues His-250 and Asp-254 each contribute to the Zn(2+) site. Topologically, residues 269–307 (YFSWKGCTEDDFCVNPCFPDPCKSSVELMNSTQAPMHEA) are extracellular. The N-linked (GlcNAc...) asparagine glycan is linked to Asn-298. Residues 308-328 (GPCWVLYLDPTLCIIMVCILL) form a helical membrane-spanning segment. Residues 329-507 (YTTYPLLKES…VPNKQPESSL (179 aa)) are Cytoplasmic-facing. Position 506 is a phosphoserine (Ser-506).

This sequence belongs to the cation diffusion facilitator (CDF) transporter (TC 2.A.4) family. SLC30A subfamily. Homodimer. Interacts with TMEM163. Interacts and forms a complex with TMC6 and TMC8; the interaction regulates zinc transport into the ER. As to expression, widely expressed. Detected in duodenum and jejunum but not in ileum and colon (at protein level). Expressed by neuroglial cells (at protein level).

It is found in the cell membrane. It localises to the basolateral cell membrane. The protein localises to the cytoplasmic vesicle membrane. The protein resides in the cytoplasm. Its subcellular location is the endoplasmic reticulum membrane. It is found in the golgi apparatus membrane. It localises to the nucleus membrane. The catalysed reaction is Zn(2+)(in) + 2 H(+)(out) = Zn(2+)(out) + 2 H(+)(in). Calcium-dependent. Zinc ion:proton antiporter that could function at the plasma membrane mediating zinc efflux from cells against its electrochemical gradient protecting them from intracellular zinc accumulation and toxicity. Alternatively, could prevent the transport to the plasma membrane of CACNB2, the L-type calcium channels regulatory subunit, through a yet to be defined mechanism. By modulating the expression of these channels at the plasma membrane, could prevent calcium and zinc influx into cells. By the same mechanism, could also prevent L-type calcium channels-mediated heavy metal influx into cells. In some cells, could also function as a zinc ion:proton antiporter mediating zinc entry into the lumen of cytoplasmic vesicles. In macrophages, can increase zinc ions concentration into the lumen of cytoplasmic vesicles containing engulfed bacteria and could help inactivate them. Forms a complex with TMC6/EVER1 and TMC8/EVER2 at the ER membrane of keratynocytes which facilitates zinc uptake into the ER. Down-regulates the activity of transcription factors induced by zinc and cytokines. The chain is Proton-coupled zinc antiporter SLC30A1 from Rattus norvegicus (Rat).